The following is a 291-amino-acid chain: Ribosomal RNA small subunit methyltransferase H (291 aa).

Residues 31 to 33 (GGH), Asp-50, Phe-77, Asp-98, and Gln-105 contribute to the S-adenosyl-L-methionine site.

It belongs to the methyltransferase superfamily. RsmH family.

The protein resides in the cytoplasm. The catalysed reaction is cytidine(1402) in 16S rRNA + S-adenosyl-L-methionine = N(4)-methylcytidine(1402) in 16S rRNA + S-adenosyl-L-homocysteine + H(+). In terms of biological role, specifically methylates the N4 position of cytidine in position 1402 (C1402) of 16S rRNA. This chain is Ribosomal RNA small subunit methyltransferase H, found in Endomicrobium trichonymphae.